The sequence spans 153 residues: Ribonuclease H (153 aa).

The RNase H type-1 domain maps to 7-148 (PADLVEMWTD…ADMLANQGVA (142 aa)). Mg(2+)-binding residues include D16, E54, D76, and D140.

The protein belongs to the RNase H family. As to quaternary structure, monomer. It depends on Mg(2+) as a cofactor.

It localises to the cytoplasm. The catalysed reaction is Endonucleolytic cleavage to 5'-phosphomonoester.. Endonuclease that specifically degrades the RNA of RNA-DNA hybrids. In Bordetella avium (strain 197N), this protein is Ribonuclease H.